A 344-amino-acid chain; its full sequence is Oxygen sensor histidine kinase NreB (344 aa).

The [4Fe-4S] cluster site is built by Cys-58, Cys-61, Cys-73, and Cys-76. The Histidine kinase domain occupies 147–344; the sequence is ENERKRISRE…GTIITLDIPI (198 aa). Phosphohistidine; by autocatalysis is present on His-158.

Requires [4Fe-4S] cluster as cofactor. Post-translationally, autophosphorylated.

It is found in the cytoplasm. It catalyses the reaction ATP + protein L-histidine = ADP + protein N-phospho-L-histidine.. Functionally, member of the two-component regulatory system NreB/NreC involved in the control of dissimilatory nitrate/nitrite reduction in response to oxygen. NreB functions as a direct oxygen sensor histidine kinase which is autophosphorylated, in the absence of oxygen, probably at the conserved histidine residue, and transfers its phosphate group probably to a conserved aspartate residue of NreC. NreB/NreC activates the expression of the nitrate (narGHJI) and nitrite (nir) reductase operons, as well as the putative nitrate transporter gene narT. This Staphylococcus epidermidis (strain ATCC 12228 / FDA PCI 1200) protein is Oxygen sensor histidine kinase NreB (nreB).